The chain runs to 346 residues: Phosphate acyltransferase (346 aa).

This sequence belongs to the PlsX family. Homodimer. Probably interacts with PlsY.

Its subcellular location is the cytoplasm. The catalysed reaction is a fatty acyl-[ACP] + phosphate = an acyl phosphate + holo-[ACP]. The protein operates within lipid metabolism; phospholipid metabolism. Functionally, catalyzes the reversible formation of acyl-phosphate (acyl-PO(4)) from acyl-[acyl-carrier-protein] (acyl-ACP). This enzyme utilizes acyl-ACP as fatty acyl donor, but not acyl-CoA. In Synechococcus elongatus (strain ATCC 33912 / PCC 7942 / FACHB-805) (Anacystis nidulans R2), this protein is Phosphate acyltransferase.